The sequence spans 603 residues: Aspartate--tRNA(Asp/Asn) ligase (603 aa).

Residue Glu187 coordinates L-aspartate. Residues 211 to 214 are aspartate; that stretch reads QQFK. L-aspartate is bound by residues Arg233 and His461. 233 to 235 is an ATP binding site; that stretch reads RDE. Glu495 is an ATP binding site. Residue Arg502 participates in L-aspartate binding. 547-550 is an ATP binding site; it reads GLDR.

This sequence belongs to the class-II aminoacyl-tRNA synthetase family. Type 1 subfamily. In terms of assembly, homodimer.

Its subcellular location is the cytoplasm. It catalyses the reaction tRNA(Asx) + L-aspartate + ATP = L-aspartyl-tRNA(Asx) + AMP + diphosphate. In terms of biological role, aspartyl-tRNA synthetase with relaxed tRNA specificity since it is able to aspartylate not only its cognate tRNA(Asp) but also tRNA(Asn). Reaction proceeds in two steps: L-aspartate is first activated by ATP to form Asp-AMP and then transferred to the acceptor end of tRNA(Asp/Asn). This is Aspartate--tRNA(Asp/Asn) ligase from Chlorobaculum parvum (strain DSM 263 / NCIMB 8327) (Chlorobium vibrioforme subsp. thiosulfatophilum).